The primary structure comprises 427 residues: Histidine--tRNA ligase (427 aa).

Belongs to the class-II aminoacyl-tRNA synthetase family. In terms of assembly, homodimer.

The protein resides in the cytoplasm. It catalyses the reaction tRNA(His) + L-histidine + ATP = L-histidyl-tRNA(His) + AMP + diphosphate + H(+). The protein is Histidine--tRNA ligase of Lacticaseibacillus casei (strain BL23) (Lactobacillus casei).